The sequence spans 71 residues: Exodeoxyribonuclease 7 small subunit (71 aa).

This sequence belongs to the XseB family. As to quaternary structure, heterooligomer composed of large and small subunits.

Its subcellular location is the cytoplasm. The enzyme catalyses Exonucleolytic cleavage in either 5'- to 3'- or 3'- to 5'-direction to yield nucleoside 5'-phosphates.. Its function is as follows. Bidirectionally degrades single-stranded DNA into large acid-insoluble oligonucleotides, which are then degraded further into small acid-soluble oligonucleotides. The chain is Exodeoxyribonuclease 7 small subunit from Streptococcus equi subsp. equi (strain 4047).